A 67-amino-acid polypeptide reads, in one-letter code: Protein Tpau_2998 (67 aa).

In Tsukamurella paurometabola (strain ATCC 8368 / DSM 20162 / CCUG 35730 / CIP 100753 / JCM 10117 / KCTC 9821 / NBRC 16120 / NCIMB 702349 / NCTC 13040) (Corynebacterium paurometabolum), this protein is Protein Tpau_2998.